The following is a 210-amino-acid chain: CKLF-like MARVEL transmembrane domain-containing protein 2B (210 aa).

Helical transmembrane passes span 35 to 55, 65 to 85, 103 to 123, and 127 to 147; these read FWAQGHAECKSLIMILLIAAM, PIVILLLTMELSICAFFFFLY, LMNDLACSTFLIGGIFFALEA, and LPVPYLTGMILMGVTAFISII. In terms of domain architecture, MARVEL spans 35–157; the sequence is FWAQGHAECK…DLCLQRRQFK (123 aa).

Belongs to the chemokine-like factor family.

The protein resides in the membrane. The polypeptide is CKLF-like MARVEL transmembrane domain-containing protein 2B (Cmtm2b) (Mus musculus (Mouse)).